The following is a 2062-amino-acid chain: MPKSGFTKPIQSENSDSDSNMVEKPYGRKSKDKIASYSKTPKIERSDVSKEMKEKSSMKRKLPFTISPSRNEERDSDTDSDPGHTSENWGERLISSYRTYSEKEGPEKKKTKKEAGNKKSTPVSILFGYPLSERKQMALLMQMTARDNSPDSTPNHPSQTTPAQKKTPSSSSRQKDKVNKRNERGETPLHMAAIRGDVKQVKELISLGANVNVKDFAGWTPLHEACNVGYYDVAKILIAAGADVNTQGLDDDTPLHDSASSGHRDIVKLLLRHGGNPFQANKHGERPVDVAETEELELLLKREVPLSDDDESYTDSEEAQSVNPSSVDENIDSETEKDSLICESKQILPSKTPLPSALDEYEFKDDDDEEINKMIDDRHILRKEQRKENEPEAEKTHLFAKQEKAFYPKSFKSKKQKPSRVLYSSTESSDEEALQNKKISTSCSVIPETSNSDMQTKKEYVVSGEHKQKGKVKRKLKNQNKNKENQELKQEKEGKENTRITNLTVNTGLDCSEKTREEGNFRKSFSPKDDTSLHLFHISTGKSPKHSCGLSEKQSTPLKQEHTKTCLSPGSSEMSLQPDLVRYDNTESEFLPESSSVKSCKHKEKSKHQKDFHLEFGEKSNAKIKDEDHSPTFENSDCTLKKMDKEGKTLKKHKLKHKEREKEKHKKEIEGEKEKYKTKDSAKELQRSVEFDREFWKENFFKSDETEDLFLNMEHESLTLEKKSKLEKNIKDDKSTKEKHVSKERNFKEERDKIKKESEKSFREEKIKDLKEERENIPTDKDSEFTSLGMSAIEESIGLHLVEKEIDIEKQEKHIKESKEKPEKRSQIKEKDIEKMERKTFEKEKKIKHEHKSEKDKLDLSECVDKIKEKDKLYSHHTEKCHKEGEKSKNTAAIKKTDDREKSREKMDRKHDKEKPEKERHLAESKEKHLMEKKNKQSDNSEYSKSEKGKNKEKDRELDKKEKSRDKESINITNSKHIQEEKKSSIVDGNKAQHEKPLSLKEKTKDEPLKTPDGKEKDKKDKDIDRYKERDKHKDKIQINSLLKLKSEADKPKPKSSPASKDTRPKEKRLVNDDLMQTSFERMLSLKDLEIEQWHKKHKEKIKQKEKERLRNRNCLELKIKDKEKTKHTPTESKNKELTRSKSSEVTDAYTKEKQPKDAVSNRSQSVDTKNVMTLGKSSFVSDNSLNRSPRSENEKPGLSSRSVSMISVASSEDSCHTTVTTPRPPVEYDSDFMLESSESQMSFSQSPFLSIAKSPALHERELDSLADLPERIKPPYANRLSTSHLRSSSVEDVKLIISEGRPTIEVRRCSMPSVICEHTKQFQTISEESNQGSLLTVPGDTSPSPKPEVFSNVPERDLSNVSNIHSSFATSPTGASNSKYVSADRNLIKNTAPVNTVMDSPVHLEPSSQVGVIQNKSWEMPVDRLETLSTRDFICPNSNIPDQESSLQSFCNSENKVLKENADFLSLRQTELPGNSCAQDPASFMPPQQPCSFPSQSLSDAESISKHMSLSYVANQEPGILQQKNAVQIISSALDTDNESTKDTENTFVLGDVQKTDAFVPVYSDSTIQEASPNFEKAYTLPVLPSEKDFNGSDASTQLNTHYAFSKLTYKSSSGHEVENSTTDTQVISHEKENKLESLVLTHLSRCDSDLCEMNAGMPKGNLNEQDPKHCPESEKCLLSIEDEESQQSILSSLENHSQQSTQPEMHKYGQLVKVELEENAEDDKTENQIPQRMTRNKANTMANQSKQILASCTLLSEKDSESSSPRGRIRLTEDDDPQIHHPRKRKVSRVPQPVQVSPSLLQAKEKTQQSLAAIVDSLKLDEIQPYSSERANPYFEYLHIRKKIEEKRKLLCSVIPQAPQYYDEYVTFNGSYLLDGNPLSKICIPTITPPPSLSDPLKELFRQQEVVRMKLRLQHSIEREKLIVSNEQEVLRVHYRAARTLANQTLPFSACTVLLDAEVYNVPLDSQSDDSKTSVRDRFNARQFMSWLQDVDDKFDKLKTCLLMRQQHEAAALNAVQRLEWQLKLQELDPATYKSISIYEIQEFYVPLVDVNDDFELTPI.

Disordered regions lie at residues 1 to 119 (MPKS…GNKK) and 145 to 188 (ARDN…GETP). Over residues 9–20 (PIQSENSDSDSN) the composition is skewed to polar residues. 2 stretches are compositionally biased toward basic and acidic residues: residues 41-57 (PKIERSDVSKEMKEKSS) and 100-117 (YSEKEGPEKKKTKKEAGN). A compositionally biased stretch (polar residues) spans 145–172 (ARDNSPDSTPNHPSQTTPAQKKTPSSSS). Phosphoserine is present on Ser149. The span at 173–187 (RQKDKVNKRNERGET) shows a compositional bias: basic and acidic residues. ANK repeat units lie at residues 184-213 (RGETPLHMAAIRGDVKQVKELISLGANVNV), 217-246 (AGWTPLHEACNVGYYDVAKILIAAGADVNT), and 250-280 (DDDTPLHDSASSGHRDIVKLLLRHGGNPFQA). 8 disordered regions span residues 301-338 (KREVPLSDDDESYTDSEEAQSVNPSSVDENIDSETEKD), 409-501 (KSFK…TRIT), 538-577 (ISTGKSPKHSCGLSEKQSTPLKQEHTKTCLSPGSSEMSLQ), 609-683 (QKDF…DSAK), 727-788 (EKNI…FTSL), 812-1073 (EKHI…LVND), 1097-1227 (KHKE…RPPV), and 1328-1350 (EESNQGSLLTVPGDTSPSPKPEV). The span at 306 to 318 (LSDDDESYTDSEE) shows a compositional bias: acidic residues. Composition is skewed to polar residues over residues 319–328 (AQSVNPSSVD) and 437–454 (KKISTSCSVIPETSNSDM). A compositionally biased stretch (basic and acidic residues) spans 455–467 (QTKKEYVVSGEHK). The segment covering 468 to 480 (QKGKVKRKLKNQN) has biased composition (basic residues). Over residues 481-498 (KNKENQELKQEKEGKENT) the composition is skewed to basic and acidic residues. Residue Ser543 is modified to Phosphoserine. The span at 565-575 (TCLSPGSSEMS) shows a compositional bias: polar residues. 8 stretches are compositionally biased toward basic and acidic residues: residues 609–631 (QKDFHLEFGEKSNAKIKDEDHSP), 639–649 (TLKKMDKEGKT), 658–683 (KEREKEKHKKEIEGEKEKYKTKDSAK), 727–784 (EKNI…KDSE), 812–969 (EKHI…DKES), 977–1037 (HIQE…KDKI), 1061–1072 (KDTRPKEKRLVN), and 1103–1157 (KQKE…KQPK). The residue at position 630 (Ser630) is a Phosphoserine. A Phosphoserine modification is found at Ser861. Residues 1161–1189 (SNRSQSVDTKNVMTLGKSSFVSDNSLNRS) are compositionally biased toward polar residues. Low complexity predominate over residues 1200–1213 (SSRSVSMISVASSE). Over residues 1328–1344 (EESNQGSLLTVPGDTSP) the composition is skewed to polar residues. Ser1401 bears the Phosphoserine mark. 2 disordered regions span residues 1721–1744 (NAEDDKTENQIPQRMTRNKANTMA) and 1756–1795 (LLSEKDSESSSPRGRIRLTEDDDPQIHHPRKRKVSRVPQP). Positions 1729 to 1744 (NQIPQRMTRNKANTMA) are enriched in polar residues.

In terms of assembly, interacts with the PAS region of the p160 coactivators.

Its subcellular location is the nucleus. In terms of biological role, may recruit HDACs to the p160 coactivators/nuclear receptor complex to inhibit ligand-dependent transactivation. The polypeptide is Ankyrin repeat domain-containing protein 12 (ANKRD12) (Homo sapiens (Human)).